The primary structure comprises 156 residues: uncharacterized protein (156 aa).

An N-terminal signal peptide occupies residues 1 to 22 (MFGKVSSLLVFASFLIIQGAFA). Serine 129 carries the GPI-anchor amidated serine lipid modification. A propeptide spans 130 to 156 (GSPVRFSKSSLLIVSLLSIAAFAALVL) (removed in mature form).

Its subcellular location is the cell membrane. This is an uncharacterized protein from Schizosaccharomyces pombe (strain 972 / ATCC 24843) (Fission yeast).